Here is a 249-residue protein sequence, read N- to C-terminus: Dihydroneopterin 2',3'-cyclic phosphate phosphodiesterase (249 aa).

Residues 58 to 172 form the HD domain; sequence LIEHTISVTK…VHYADEADSK (115 aa).

As to quaternary structure, homododecamer. It depends on Fe(2+) as a cofactor. The cofactor is Zn(2+).

It catalyses the reaction 7,8-dihydroneopterin 2',3'-cyclic phosphate + H2O = 7,8-dihydroneopterin 3'-phosphate + H(+). The catalysed reaction is 7,8-dihydroneopterin 2',3'-cyclic phosphate + H2O = 7,8-dihydroneopterin 2'-phosphate + H(+). Its pathway is cofactor biosynthesis; 5,6,7,8-tetrahydromethanopterin biosynthesis. Its function is as follows. Cyclic phosphodiesterase that hydrolyzes the cyclic phosphate of 7,8-dihydroneopterin 2',3'-cyclic phosphate (H2N-cP) and converts it to a mixture of 7,8-dihydroneopterin 2'-phosphate (H2N-2'P) and 7,8-dihydroneopterin 3'-phosphate (H2N-3'P). Is also able to utilize other phosphodiesters as substrates in vitro: hydrolysis of bis-pNPP and pNPPC produces nitrophenyl phosphate, and that of 2',3'-cAMP produces 3'-AMP. ATP, 3',5'-cAMP, GTP, 3',5'-cGMP, and 4',5'-cFMN cannot serve as substrates. This chain is Dihydroneopterin 2',3'-cyclic phosphate phosphodiesterase (mptB), found in Methanocaldococcus jannaschii (strain ATCC 43067 / DSM 2661 / JAL-1 / JCM 10045 / NBRC 100440) (Methanococcus jannaschii).